The following is a 561-amino-acid chain: 4-coumarate--CoA ligase 3 (561 aa).

6 residues coordinate ATP: S213, S214, G215, T216, T217, and K221. Residues Y263 and S267 each coordinate (E)-4-coumaroyl-AMP. Position 284 (K284) interacts with CoA. Residues 286-355 form an SBD1 region; the sequence is EIGALLDLIQ…RRLPQAILGQ (70 aa). (E)-4-coumaroyl-AMP-binding residues include A333, Q355, G356, T360, and M368. Positions 355, 356, and 360 each coordinate ATP. The interval 356 to 423 is SBD2; that stretch reads GYGMTEAGPV…IRGQQIMKEY (68 aa). Residues D444 and R459 each coordinate ATP. 2 residues coordinate (E)-4-coumaroyl-AMP: K461 and K465. CoA contacts are provided by K467 and G468. An ATP-binding site is contributed by K550.

Belongs to the ATP-dependent AMP-binding enzyme family. Mg(2+) is required as a cofactor. As to expression, preferentially expressed in leaves, flowers and siliques.

It catalyses the reaction (E)-4-coumarate + ATP + CoA = (E)-4-coumaroyl-CoA + AMP + diphosphate. It carries out the reaction (E)-caffeate + ATP + CoA = (E)-caffeoyl-CoA + AMP + diphosphate. The enzyme catalyses (E)-ferulate + ATP + CoA = (E)-feruloyl-CoA + AMP + diphosphate. The catalysed reaction is (E)-4-coumarate + ATP + H(+) = (E)-4-coumaroyl-AMP + diphosphate. It catalyses the reaction (E)-4-coumaroyl-AMP + CoA = (E)-4-coumaroyl-CoA + AMP + H(+). It carries out the reaction (E)-caffeate + ATP + H(+) = (E)-caffeoyl-AMP + diphosphate. The enzyme catalyses (E)-caffeoyl-AMP + CoA = (E)-caffeoyl-CoA + AMP + H(+). The catalysed reaction is (E)-ferulate + ATP + H(+) = (E)-feruloyl-AMP + diphosphate. It catalyses the reaction (E)-feruloyl-AMP + CoA = (E)-feruloyl-CoA + AMP + H(+). Its pathway is phytoalexin biosynthesis; 3,4',5-trihydroxystilbene biosynthesis; 3,4',5-trihydroxystilbene from trans-4-coumarate: step 1/2. In terms of biological role, produces CoA thioesters of a variety of hydroxy- and methoxy-substituted cinnamic acids, which are used to synthesize several phenylpropanoid-derived compounds, including anthocyanins, flavonoids, isoflavonoids, coumarins, lignin, suberin and wall-bound phenolics. Follows a two-step reaction mechanism, wherein the carboxylate substrate first undergoes adenylation by ATP, followed by a thioesterification in the presence of CoA to yield the final CoA thioesters. This chain is 4-coumarate--CoA ligase 3, found in Arabidopsis thaliana (Mouse-ear cress).